The sequence spans 89 residues: DNA/RNA-binding protein Alba 2 (89 aa).

Lys-12 carries the N6-acetyllysine modification. Zn(2+)-binding residues include Lys-14, Asp-18, and Asp-22.

This sequence belongs to the histone-like Alba family. As to quaternary structure, forms homodimers and homotetramers. Homodimer at pH below 6.0. Forms homotetramers and higher order homooligomers at near the growth temperature of 80 degrees Celsius and pH 7.0. Interacts with Alba 1; heterodimers lack cooperative DNA-binding behavior and result in more compact chromatin structures compared to Alba 1 homodimers. Post-translationally, acetylated. Acetylation at Lys-12 decreases DNA-binding affinity.

The protein localises to the cytoplasm. Its subcellular location is the chromosome. In terms of biological role, binds single-stranded DNA, RNA and double-stranded DNA. Involved in DNA compaction. In Saccharolobus solfataricus (strain ATCC 35092 / DSM 1617 / JCM 11322 / P2) (Sulfolobus solfataricus), this protein is DNA/RNA-binding protein Alba 2.